The following is a 507-amino-acid chain: Histidine ammonia-lyase (507 aa).

Residues 143-145 constitute a cross-link (5-imidazolinone (Ala-Gly)); the sequence is ASG. Ser144 is subject to 2,3-didehydroalanine (Ser).

This sequence belongs to the PAL/histidase family. Contains an active site 4-methylidene-imidazol-5-one (MIO), which is formed autocatalytically by cyclization and dehydration of residues Ala-Ser-Gly.

It localises to the cytoplasm. The catalysed reaction is L-histidine = trans-urocanate + NH4(+). It functions in the pathway amino-acid degradation; L-histidine degradation into L-glutamate; N-formimidoyl-L-glutamate from L-histidine: step 1/3. This is Histidine ammonia-lyase from Alkaliphilus oremlandii (strain OhILAs) (Clostridium oremlandii (strain OhILAs)).